Consider the following 171-residue polypeptide: Crossover junction endodeoxyribonuclease RuvC (171 aa).

Catalysis depends on residues aspartate 7, glutamate 66, and aspartate 138. Aspartate 7, glutamate 66, and aspartate 138 together coordinate Mg(2+).

This sequence belongs to the RuvC family. Homodimer which binds Holliday junction (HJ) DNA. The HJ becomes 2-fold symmetrical on binding to RuvC with unstacked arms; it has a different conformation from HJ DNA in complex with RuvA. In the full resolvosome a probable DNA-RuvA(4)-RuvB(12)-RuvC(2) complex forms which resolves the HJ. Mg(2+) serves as cofactor.

The protein localises to the cytoplasm. It catalyses the reaction Endonucleolytic cleavage at a junction such as a reciprocal single-stranded crossover between two homologous DNA duplexes (Holliday junction).. In terms of biological role, the RuvA-RuvB-RuvC complex processes Holliday junction (HJ) DNA during genetic recombination and DNA repair. Endonuclease that resolves HJ intermediates. Cleaves cruciform DNA by making single-stranded nicks across the HJ at symmetrical positions within the homologous arms, yielding a 5'-phosphate and a 3'-hydroxyl group; requires a central core of homology in the junction. The consensus cleavage sequence is 5'-(A/T)TT(C/G)-3'. Cleavage occurs on the 3'-side of the TT dinucleotide at the point of strand exchange. HJ branch migration catalyzed by RuvA-RuvB allows RuvC to scan DNA until it finds its consensus sequence, where it cleaves and resolves the cruciform DNA. This Francisella philomiragia subsp. philomiragia (strain ATCC 25017 / CCUG 19701 / FSC 153 / O#319-036) protein is Crossover junction endodeoxyribonuclease RuvC.